Here is a 129-residue protein sequence, read N- to C-terminus: Small ribosomal subunit protein uS11 (129 aa).

This sequence belongs to the universal ribosomal protein uS11 family. In terms of assembly, part of the 30S ribosomal subunit. Interacts with proteins S7 and S18. Binds to IF-3.

Functionally, located on the platform of the 30S subunit, it bridges several disparate RNA helices of the 16S rRNA. Forms part of the Shine-Dalgarno cleft in the 70S ribosome. The protein is Small ribosomal subunit protein uS11 of Histophilus somni (strain 129Pt) (Haemophilus somnus).